A 675-amino-acid chain; its full sequence is Sodium/myo-inositol cotransporter 2 (675 aa).

Residues methionine 1 to glycine 27 lie on the Extracellular side of the membrane. The helical transmembrane segment at aspartate 28–valine 48 threads the bilayer. Topologically, residues lysine 49–methionine 65 are cytoplasmic. The helical transmembrane segment at valine 66 to alanine 88 threads the bilayer. The Extracellular segment spans residues glycine 89–glutamate 102. A helical transmembrane segment spans residues leucine 103 to glycine 123. The Cytoplasmic portion of the chain corresponds to glutamine 124–arginine 135. The chain crosses the membrane as a helical span at residues phenylalanine 136–threonine 156. Residues lysine 157–alanine 180 lie on the Extracellular side of the membrane. The chain crosses the membrane as a helical span at residues isoleucine 181–isoleucine 201. Residues tyrosine 202–threonine 208 lie on the Cytoplasmic side of the membrane. A helical transmembrane segment spans residues leucine 209–methionine 229. Over glutamate 230–proline 272 the chain is Extracellular. Residues glycine 273–valine 293 form a helical membrane-spanning segment. The Cytoplasmic portion of the chain corresponds to glutamine 294 to glycine 308. The helical transmembrane segment at alanine 309–valine 329 threads the bilayer. Residues serine 330–glycine 375 lie on the Extracellular side of the membrane. The helical transmembrane segment at leucine 376–alanine 396 threads the bilayer. Topologically, residues serine 397–methionine 418 are cytoplasmic. The helical transmembrane segment at isoleucine 419–valine 439 threads the bilayer. Residues glutamine 440–glutamine 446 are Extracellular-facing. The chain crosses the membrane as a helical span at residues leucine 447 to isoleucine 467. Residues methionine 468–glycine 479 are Cytoplasmic-facing. A helical transmembrane segment spans residues alanine 480–isoleucine 500. The Extracellular portion of the chain corresponds to tyrosine 501–tyrosine 521. Residues leucine 522–phenylalanine 542 form a helical membrane-spanning segment. The Cytoplasmic portion of the chain corresponds to threonine 543–threonine 654. A helical transmembrane segment spans residues leucine 655–alanine 675.

This sequence belongs to the sodium:solute symporter (SSF) (TC 2.A.21) family. As to expression, highest expression in heart, skeletal muscle, kidney, liver and placenta. Weaker expression in brain, colon, spleen, lung and peripheral blood leukocytes.

The protein localises to the membrane. It localises to the apical cell membrane. It carries out the reaction myo-inositol(out) + 2 Na(+)(out) = myo-inositol(in) + 2 Na(+)(in). The catalysed reaction is 1D-chiro-inositol(out) + 2 Na(+)(out) = 1D-chiro-inositol(in) + 2 Na(+)(in). It catalyses the reaction D-glucose(out) + 2 Na(+)(out) = D-glucose(in) + 2 Na(+)(in). The enzyme catalyses D-xylose(out) + 2 Na(+)(out) = D-xylose(in) + 2 Na(+)(in). With respect to regulation, MI transport activity inhibited by D-chiro-inositol (DCI), phlorizin (Pz) and sodium (Na(+)). Insulin increases D-chiro-inositol uptake. In terms of biological role, involved in the sodium-dependent cotransport of myo-inositol (MI) with a Na(+):MI stoichiometry of 2:1. Exclusively responsible for apical MI transport and absorption in intestine. Can also transport D-chiro-inositol (DCI) but not L-fucose. Exhibits stereospecific cotransport of both D-glucose and D-xylose. May induce apoptosis through the TNF-alpha, PDCD1 pathway. May play a role in the regulation of MI concentration in serum, involving reabsorption in at least the proximal tubule of the kidney. This is Sodium/myo-inositol cotransporter 2 from Homo sapiens (Human).